The sequence spans 204 residues: LexA repressor (204 aa).

A DNA-binding region (H-T-H motif) is located at residues 30–50 (IREICQGVGLSSPSTVHHHLK). Residues S125 and K162 each act as for autocatalytic cleavage activity in the active site.

This sequence belongs to the peptidase S24 family. In terms of assembly, homodimer.

The enzyme catalyses Hydrolysis of Ala-|-Gly bond in repressor LexA.. Its function is as follows. Represses a number of genes involved in the response to DNA damage (SOS response), including recA and lexA. In the presence of single-stranded DNA, RecA interacts with LexA causing an autocatalytic cleavage which disrupts the DNA-binding part of LexA, leading to derepression of the SOS regulon and eventually DNA repair. In Carboxydothermus hydrogenoformans (strain ATCC BAA-161 / DSM 6008 / Z-2901), this protein is LexA repressor.